Reading from the N-terminus, the 306-residue chain is Homoserine O-acetyltransferase (306 aa).

Cysteine 142 serves as the catalytic Acyl-thioester intermediate. Lysine 163 and serine 192 together coordinate substrate. Histidine 235 functions as the Proton acceptor in the catalytic mechanism. Residue glutamate 237 is part of the active site. Arginine 249 is a substrate binding site.

It belongs to the MetA family.

Its subcellular location is the cytoplasm. It catalyses the reaction L-homoserine + acetyl-CoA = O-acetyl-L-homoserine + CoA. The protein operates within amino-acid biosynthesis; L-methionine biosynthesis via de novo pathway; O-acetyl-L-homoserine from L-homoserine: step 1/1. Functionally, transfers an acetyl group from acetyl-CoA to L-homoserine, forming acetyl-L-homoserine. The sequence is that of Homoserine O-acetyltransferase from Brucella abortus (strain S19).